The primary structure comprises 325 residues: Helicase VP6-A (325 aa).

Disordered stretches follow at residues 1–126 (MLLA…TNGR) and 175–231 (GVAE…PARI). Basic and acidic residues-rich tracts occupy residues 8–18 (VIKRSSEELKQ), 32–54 (EGGKEDKTEPKEESKAEGSKDGE), 61–79 (GQKEEGGKETKDADVDRRI), and 92–105 (PGERANENADRGDG). Residue lysine 106 participates in ATP binding. Over residues 106–122 (KVGGGGGDADAGVGATG) the composition is skewed to gly residues. The segment covering 175–229 (GVAEQTERLRDLRRKEKNGTHAKAVERGGRKQRKESHGDAQREGVEEEKTSEEPA) has biased composition (basic and acidic residues).

Belongs to the orbivirus VP6 family. In terms of assembly, homohexamer.

Its subcellular location is the virion. It catalyses the reaction ATP + H2O = ADP + phosphate + H(+). In terms of biological role, ATP dependent RNA helicase essential for RNA packaging and viral transcription. Possesses ss- and dsRNA-binding capacity. The sequence is that of Helicase VP6-A (Segment-9) from Bluetongue virus 11 (isolate USA) (BTV 11).